The primary structure comprises 638 residues: Phosphomethylpyrimidine synthase (638 aa).

Substrate contacts are provided by residues N243, M272, Y301, H337, 357–359 (SRG), 398–401 (DGLR), and E437. Residue H441 coordinates Zn(2+). A substrate-binding site is contributed by Y464. H505 lines the Zn(2+) pocket. [4Fe-4S] cluster-binding residues include C585, C588, and C593.

It belongs to the ThiC family. In terms of assembly, homodimer. [4Fe-4S] cluster serves as cofactor.

It catalyses the reaction 5-amino-1-(5-phospho-beta-D-ribosyl)imidazole + S-adenosyl-L-methionine = 4-amino-2-methyl-5-(phosphooxymethyl)pyrimidine + CO + 5'-deoxyadenosine + formate + L-methionine + 3 H(+). The protein operates within cofactor biosynthesis; thiamine diphosphate biosynthesis. Its function is as follows. Catalyzes the synthesis of the hydroxymethylpyrimidine phosphate (HMP-P) moiety of thiamine from aminoimidazole ribotide (AIR) in a radical S-adenosyl-L-methionine (SAM)-dependent reaction. The chain is Phosphomethylpyrimidine synthase from Dechloromonas aromatica (strain RCB).